The chain runs to 288 residues: Fructokinase (288 aa).

Threonine 131 lines the ATP pocket. The Zn(2+) site is built by histidine 154, cysteine 169, histidine 172, and cysteine 175. Residues proline 183 and 231–235 (GVMNQ) each bind ATP.

It belongs to the ROK (NagC/XylR) family. The cofactor is Mg(2+).

It carries out the reaction D-fructose + ATP = D-fructose 6-phosphate + ADP + H(+). Inhibition by zinc ions. The polypeptide is Fructokinase (scrK) (Pediococcus pentosaceus).